A 329-amino-acid chain; its full sequence is N-acetyl-gamma-glutamyl-phosphate reductase (329 aa).

The active site involves Cys-155.

The protein belongs to the NAGSA dehydrogenase family. Type 1 subfamily.

Its subcellular location is the cytoplasm. The enzyme catalyses N-acetyl-L-glutamate 5-semialdehyde + phosphate + NADP(+) = N-acetyl-L-glutamyl 5-phosphate + NADPH + H(+). It participates in amino-acid biosynthesis; L-arginine biosynthesis; N(2)-acetyl-L-ornithine from L-glutamate: step 3/4. Its function is as follows. Catalyzes the NADPH-dependent reduction of N-acetyl-5-glutamyl phosphate to yield N-acetyl-L-glutamate 5-semialdehyde. In Shewanella piezotolerans (strain WP3 / JCM 13877), this protein is N-acetyl-gamma-glutamyl-phosphate reductase.